The sequence spans 400 residues: S-adenosylmethionine synthase (400 aa).

Histidine 17 is an ATP binding site. Aspartate 19 contributes to the Mg(2+) binding site. Glutamate 45 lines the K(+) pocket. Glutamate 58 and glutamine 101 together coordinate L-methionine. Positions 101-111 (QSPDIAMGVDQ) are flexible loop. ATP contacts are provided by residues 177 to 179 (DGK), 244 to 245 (RF), aspartate 253, 259 to 260 (RK), alanine 276, and lysine 280. Residue aspartate 253 coordinates L-methionine. Lysine 284 provides a ligand contact to L-methionine.

It belongs to the AdoMet synthase family. Homotetramer; dimer of dimers. It depends on Mg(2+) as a cofactor. The cofactor is K(+).

The protein localises to the cytoplasm. The catalysed reaction is L-methionine + ATP + H2O = S-adenosyl-L-methionine + phosphate + diphosphate. The protein operates within amino-acid biosynthesis; S-adenosyl-L-methionine biosynthesis; S-adenosyl-L-methionine from L-methionine: step 1/1. In terms of biological role, catalyzes the formation of S-adenosylmethionine (AdoMet) from methionine and ATP. The overall synthetic reaction is composed of two sequential steps, AdoMet formation and the subsequent tripolyphosphate hydrolysis which occurs prior to release of AdoMet from the enzyme. The chain is S-adenosylmethionine synthase from Bacillus licheniformis (strain ATCC 14580 / DSM 13 / JCM 2505 / CCUG 7422 / NBRC 12200 / NCIMB 9375 / NCTC 10341 / NRRL NRS-1264 / Gibson 46).